The following is a 309-amino-acid chain: Mitochondrial glycine transporter (309 aa).

Solcar repeat units lie at residues 2 to 94, 124 to 207, and 219 to 304; these read SNVG…LRAL, LTSQ…IKHE, and QATL…GLML. The next 6 helical transmembrane spans lie at 8–33, 69–95, 130–155, 182–205, 223–249, and 279–297; these read LLSG…TRLQ, GTTP…RALM, LIAG…ARFE, GFLA…EGIK, IHGL…KTKI, and GASL…GWAV.

The protein belongs to the mitochondrial carrier (TC 2.A.29) family. SLC25A38 subfamily.

The protein localises to the mitochondrion inner membrane. It catalyses the reaction glycine(in) = glycine(out). Mitochondrial glycine transporter that imports glycine into the mitochondrial matrix. Plays an important role in providing glycine for the first enzymatic step in heme biosynthesis, the condensation of glycine with succinyl-CoA to produce 5-aminolevulinate (ALA) in the mitochondrial matrix. The protein is Mitochondrial glycine transporter of Laccaria bicolor (strain S238N-H82 / ATCC MYA-4686) (Bicoloured deceiver).